We begin with the raw amino-acid sequence, 269 residues long: MTASNAAIHLYGASLRHGQVRALDAVSLRIAQGERVAIIGPSGAGKSSLLHLMATAIQPSSGRLELLGEQPWALSARARQRLRARVGLVHQSPPLPPRQRVVTAVLAGRLGQWGTLRGLLNLLYPSDVPGARQVLAELGLADKLFVQCGQLSGGQLQRVGIARALYQRPQVLLTDEPVSAMDPVLADHSLALLNRHAQATGVTLVASLHAVELALAHFPRVIGIREGQVVFDCPAEAVTEQLLDALYANEQLAPPPTQGPTLTVQIPRC.

An ABC transporter domain is found at 8–251; sequence IHLYGASLRH…LLDALYANEQ (244 aa). 40–47 is a binding site for ATP; that stretch reads GPSGAGKS.

The protein belongs to the ABC transporter superfamily. Phosphonates importer (TC 3.A.1.9.1) family. In terms of assembly, the complex is composed of two ATP-binding proteins (PhnC), two transmembrane proteins (PhnE) and a solute-binding protein (PhnD).

The protein localises to the cell inner membrane. The catalysed reaction is phosphonate(out) + ATP + H2O = phosphonate(in) + ADP + phosphate + H(+). Part of the ABC transporter complex PhnCDE involved in phosphonates import. Responsible for energy coupling to the transport system. This is Phosphonates import ATP-binding protein PhnC from Pseudomonas putida (strain ATCC 47054 / DSM 6125 / CFBP 8728 / NCIMB 11950 / KT2440).